A 123-amino-acid polypeptide reads, in one-letter code: Large ribosomal subunit protein bL12 (123 aa).

It belongs to the bacterial ribosomal protein bL12 family. In terms of assembly, homodimer. Part of the ribosomal stalk of the 50S ribosomal subunit. Forms a multimeric L10(L12)X complex, where L10 forms an elongated spine to which 2 to 4 L12 dimers bind in a sequential fashion. Binds GTP-bound translation factors.

Forms part of the ribosomal stalk which helps the ribosome interact with GTP-bound translation factors. Is thus essential for accurate translation. The protein is Large ribosomal subunit protein bL12 of Finegoldia magna (strain ATCC 29328 / DSM 20472 / WAL 2508) (Peptostreptococcus magnus).